We begin with the raw amino-acid sequence, 340 residues long: Phosphoribosylformylglycinamidine cyclo-ligase (340 aa).

This sequence belongs to the AIR synthase family.

Its subcellular location is the cytoplasm. It catalyses the reaction 2-formamido-N(1)-(5-O-phospho-beta-D-ribosyl)acetamidine + ATP = 5-amino-1-(5-phospho-beta-D-ribosyl)imidazole + ADP + phosphate + H(+). Its pathway is purine metabolism; IMP biosynthesis via de novo pathway; 5-amino-1-(5-phospho-D-ribosyl)imidazole from N(2)-formyl-N(1)-(5-phospho-D-ribosyl)glycinamide: step 2/2. In Crocosphaera subtropica (strain ATCC 51142 / BH68) (Cyanothece sp. (strain ATCC 51142)), this protein is Phosphoribosylformylglycinamidine cyclo-ligase.